A 1021-amino-acid polypeptide reads, in one-letter code: PDZ domain-containing protein 7 (1021 aa).

2 PDZ domains span residues Ala-86–Ser-156 and Ile-210–Lys-279. Over residues Ser-324–Ser-344 the composition is skewed to low complexity. 3 disordered regions span residues Ser-324–Asp-345, Ile-431–Ser-495, and Arg-724–Arg-814. Positions Ala-729 to Pro-744 are enriched in pro residues. Residues Gln-758–Gln-767 are compositionally biased toward polar residues. Residues Ser-772–Ser-794 are compositionally biased toward basic residues. The span at Pro-799–Gly-808 shows a compositional bias: low complexity. The region spanning Thr-858–Ala-930 is the PDZ 3 domain. The segment at Gln-992 to Ser-1021 is disordered.

As to quaternary structure, homodimerizes (via PDZ2 domain). Component of USH2 complex, composed of ADGRV1, PDZD7, USH2A and WHRN. Interacts (via PDZ domains) with WHRN; the interaction is direct. Interacts with USH1G. Interacts with ADGRV1 (via the cytoplasmic region). Interacts with USH2A (via the cytoplasmic region). Interacts with MYO7A (via MyTH4-FERM domains). In terms of tissue distribution, isoform 1 is expressed in developing and adult cochlea but not retina. Isoform 2 is expressed in developing and adult cochlea and retina. Isoform 3 is expressed in adult cochlea and retina. Isoform 4 is expressed in retina and developing cochlea but not adult cochlea. Isoform 5 is expressed in adult cochlea but not in developing cochlea or retina.

The protein resides in the cell projection. Its subcellular location is the cilium. It is found in the nucleus. The protein localises to the stereocilium. In cochlear developing hair cells, essential in organizing the USH2 complex at stereocilia ankle links. Blocks inhibition of adenylate cyclase activity mediated by ADGRV1. The polypeptide is PDZ domain-containing protein 7 (Mus musculus (Mouse)).